The primary structure comprises 185 residues: Putative manganese efflux pump MntP (185 aa).

The next 6 membrane-spanning stretches (helical) occupy residues 6–26, 41–61, 65–85, 107–127, 132–152, and 164–184; these read IFIISVALAMDAFTIAVACGL, FHFGLFQALMPLLGWLAGLTV, VETYAPWISFFLLAFVGGKMI, LVFLSVATSLDALAVGLSFSI, IAFPCVMIGITALVLTSFGLW, and SHIAERIGGVVLILIGLKLLL.

The protein belongs to the MntP (TC 9.B.29) family.

The protein resides in the cell inner membrane. Probably functions as a manganese efflux pump. This chain is Putative manganese efflux pump MntP, found in Maridesulfovibrio salexigens (strain ATCC 14822 / DSM 2638 / NCIMB 8403 / VKM B-1763) (Desulfovibrio salexigens).